The following is a 428-amino-acid chain: 3-phosphoshikimate 1-carboxyvinyltransferase (428 aa).

3 residues coordinate 3-phosphoshikimate: K22, S23, and R27. K22 lines the phosphoenolpyruvate pocket. Phosphoenolpyruvate-binding residues include G94 and R122. Positions 168, 169, 170, 196, 315, and 342 each coordinate 3-phosphoshikimate. Phosphoenolpyruvate is bound at residue Q170. D315 serves as the catalytic Proton acceptor. Phosphoenolpyruvate contacts are provided by R346, R389, and K414.

This sequence belongs to the EPSP synthase family. Monomer.

It is found in the cytoplasm. It carries out the reaction 3-phosphoshikimate + phosphoenolpyruvate = 5-O-(1-carboxyvinyl)-3-phosphoshikimate + phosphate. It participates in metabolic intermediate biosynthesis; chorismate biosynthesis; chorismate from D-erythrose 4-phosphate and phosphoenolpyruvate: step 6/7. In terms of biological role, catalyzes the transfer of the enolpyruvyl moiety of phosphoenolpyruvate (PEP) to the 5-hydroxyl of shikimate-3-phosphate (S3P) to produce enolpyruvyl shikimate-3-phosphate and inorganic phosphate. The polypeptide is 3-phosphoshikimate 1-carboxyvinyltransferase (Thiobacillus denitrificans (strain ATCC 25259 / T1)).